We begin with the raw amino-acid sequence, 306 residues long: Aspartate carbamoyltransferase catalytic subunit (306 aa).

Carbamoyl phosphate-binding residues include Arg-53 and Thr-54. Lys-82 serves as a coordination point for L-aspartate. Positions 103, 131, and 134 each coordinate carbamoyl phosphate. The L-aspartate site is built by Arg-164 and Arg-226. Residues Leu-263 and Pro-264 each coordinate carbamoyl phosphate.

This sequence belongs to the aspartate/ornithine carbamoyltransferase superfamily. ATCase family. As to quaternary structure, heterododecamer (2C3:3R2) of six catalytic PyrB chains organized as two trimers (C3), and six regulatory PyrI chains organized as three dimers (R2).

It catalyses the reaction carbamoyl phosphate + L-aspartate = N-carbamoyl-L-aspartate + phosphate + H(+). The protein operates within pyrimidine metabolism; UMP biosynthesis via de novo pathway; (S)-dihydroorotate from bicarbonate: step 2/3. Catalyzes the condensation of carbamoyl phosphate and aspartate to form carbamoyl aspartate and inorganic phosphate, the committed step in the de novo pyrimidine nucleotide biosynthesis pathway. This Methanocaldococcus jannaschii (strain ATCC 43067 / DSM 2661 / JAL-1 / JCM 10045 / NBRC 100440) (Methanococcus jannaschii) protein is Aspartate carbamoyltransferase catalytic subunit.